A 443-amino-acid chain; its full sequence is UDP-N-acetylmuramate--L-alanine ligase (443 aa).

110–116 is an ATP binding site; that stretch reads GAHGKTS.

This sequence belongs to the MurCDEF family.

The protein resides in the cytoplasm. It catalyses the reaction UDP-N-acetyl-alpha-D-muramate + L-alanine + ATP = UDP-N-acetyl-alpha-D-muramoyl-L-alanine + ADP + phosphate + H(+). Its pathway is cell wall biogenesis; peptidoglycan biosynthesis. In terms of biological role, cell wall formation. The chain is UDP-N-acetylmuramate--L-alanine ligase from Streptococcus agalactiae serotype III (strain NEM316).